The chain runs to 262 residues: Autophagy-related protein 27 (262 aa).

The signal sequence occupies residues 1 to 20 (MLKMRLLLTWVLLVLPLVNA). The 150-residue stretch at 21–170 (LKCANNRVLR…IIKGPSGCKK (150 aa)) folds into the MRH domain. Topologically, residues 21 to 185 (LKCANNRVLR…EDGDVEESSG (165 aa)) are lumenal. Intrachain disulfides connect Cys23–Cys61, Cys73–Cys80, and Cys139–Cys168. A helical transmembrane segment spans residues 186-206 (LSWFTWLFIYAIFFTVVYLVV). The Cytoplasmic segment spans residues 207 to 262 (TSYTQTRGGSIDDFRHDFVERAKQFFTSLPAFVREVVSKVLGSAPNAAERGGYSAV).

The protein belongs to the ATG27 family.

It is found in the cytoplasmic vesicle membrane. The protein localises to the golgi apparatus membrane. The protein resides in the mitochondrion membrane. Functionally, regulates the cytoplasm to vacuole transport (Cvt) vesicle formation. The protein is Autophagy-related protein 27 (ATG27) of Vanderwaltozyma polyspora (strain ATCC 22028 / DSM 70294 / BCRC 21397 / CBS 2163 / NBRC 10782 / NRRL Y-8283 / UCD 57-17) (Kluyveromyces polysporus).